Reading from the N-terminus, the 527-residue chain is UDP-glucuronosyltransferase 2A3 (527 aa).

Residues 1-23 (MRSDKSALVFLLLQLFCVGCGFC) form the signal peptide. Topologically, residues 24 to 491 (GKVLVWPCDM…TWFQHYSIDV (468 aa)) are extracellular. Asn313 is a glycosylation site (N-linked (GlcNAc...) asparagine). A helical transmembrane segment spans residues 492-512 (IGFLLACVATAIFLFTKCFLF). The Cytoplasmic segment spans residues 513 to 527 (SCQKFNKTRKIEKRE).

This sequence belongs to the UDP-glycosyltransferase family.

It localises to the membrane. The enzyme catalyses glucuronate acceptor + UDP-alpha-D-glucuronate = acceptor beta-D-glucuronoside + UDP + H(+). In terms of biological role, UDP-glucuronosyltransferases catalyze phase II biotransformation reactions in which lipophilic substrates are conjugated with glucuronic acid to increase water solubility and enhance excretion. They are of major importance in the conjugation and subsequent elimination of potentially toxic xenobiotics and endogenous compounds. The chain is UDP-glucuronosyltransferase 2A3 (UGT2A3) from Homo sapiens (Human).